A 346-amino-acid polypeptide reads, in one-letter code: Sensor protein kinase GraS (346 aa).

2 helical membrane-spanning segments follow: residues 18 to 38 (IFWI…DYDF) and 43 to 63 (LFYI…LTFF). The 207-residue stretch at 126 to 332 (EFVHDIKTPV…TVKLIFPLQN (207 aa)) folds into the Histidine kinase domain.

As to quaternary structure, interacts with GraX.

Its subcellular location is the cell membrane. The enzyme catalyses ATP + protein L-histidine = ADP + protein N-phospho-L-histidine.. Functionally, member of the two-component regulatory system GraR/GraS involved in resistance against cationic antimicrobial peptides (CAMPs). Functions as a sensor protein kinase which phosphorylates GraR through the auxiliary protein GraX. In turn, GraR up-regulates many genes such as adhesins, exoproteins, transporters, toxins, and proteins involved in cell wall synthesis. Down-regulates the expression of many genes involved in RNA and amino acid synthesis or glycolysis. The sequence is that of Sensor protein kinase GraS (graS) from Staphylococcus aureus (strain MRSA252).